Consider the following 90-residue polypeptide: Small ribosomal subunit protein bS16 (90 aa).

This sequence belongs to the bacterial ribosomal protein bS16 family.

The protein is Small ribosomal subunit protein bS16 of Fervidobacterium nodosum (strain ATCC 35602 / DSM 5306 / Rt17-B1).